A 579-amino-acid chain; its full sequence is O-fucosyltransferase 24 (579 aa).

A helical; Signal-anchor for type II membrane protein transmembrane segment spans residues 58-78; it reads LWAFSLFLLSILGISLRLGLC. N133 carries N-linked (GlcNAc...) asparagine glycosylation. Residue 355–357 participates in substrate binding; the sequence is HLR. Residues N528, N573, and N576 are each glycosylated (N-linked (GlcNAc...) asparagine).

This sequence belongs to the glycosyltransferase GT106 family.

It is found in the membrane. The protein operates within glycan metabolism. This Arabidopsis thaliana (Mouse-ear cress) protein is O-fucosyltransferase 24.